The following is a 259-amino-acid chain: Deoxyribose-phosphate aldolase (259 aa).

The active-site Proton donor/acceptor is aspartate 102. Lysine 167 acts as the Schiff-base intermediate with acetaldehyde in catalysis. Lysine 201 acts as the Proton donor/acceptor in catalysis.

This sequence belongs to the DeoC/FbaB aldolase family. DeoC type 2 subfamily.

It localises to the cytoplasm. The enzyme catalyses 2-deoxy-D-ribose 5-phosphate = D-glyceraldehyde 3-phosphate + acetaldehyde. It participates in carbohydrate degradation; 2-deoxy-D-ribose 1-phosphate degradation; D-glyceraldehyde 3-phosphate and acetaldehyde from 2-deoxy-alpha-D-ribose 1-phosphate: step 2/2. Its function is as follows. Catalyzes a reversible aldol reaction between acetaldehyde and D-glyceraldehyde 3-phosphate to generate 2-deoxy-D-ribose 5-phosphate. This chain is Deoxyribose-phosphate aldolase, found in Shigella boydii serotype 4 (strain Sb227).